The chain runs to 477 residues: Aspartyl/glutamyl-tRNA(Asn/Gln) amidotransferase subunit B (477 aa).

The protein belongs to the GatB/GatE family. GatB subfamily. As to quaternary structure, heterotrimer of A, B and C subunits.

The enzyme catalyses L-glutamyl-tRNA(Gln) + L-glutamine + ATP + H2O = L-glutaminyl-tRNA(Gln) + L-glutamate + ADP + phosphate + H(+). It carries out the reaction L-aspartyl-tRNA(Asn) + L-glutamine + ATP + H2O = L-asparaginyl-tRNA(Asn) + L-glutamate + ADP + phosphate + 2 H(+). Its function is as follows. Allows the formation of correctly charged Asn-tRNA(Asn) or Gln-tRNA(Gln) through the transamidation of misacylated Asp-tRNA(Asn) or Glu-tRNA(Gln) in organisms which lack either or both of asparaginyl-tRNA or glutaminyl-tRNA synthetases. The reaction takes place in the presence of glutamine and ATP through an activated phospho-Asp-tRNA(Asn) or phospho-Glu-tRNA(Gln). The polypeptide is Aspartyl/glutamyl-tRNA(Asn/Gln) amidotransferase subunit B (Legionella pneumophila (strain Paris)).